A 512-amino-acid chain; its full sequence is ATP synthase subunit alpha (512 aa).

An ATP-binding site is contributed by 169–176; the sequence is GDRQTGKT.

Belongs to the ATPase alpha/beta chains family. In terms of assembly, F-type ATPases have 2 components, CF(1) - the catalytic core - and CF(0) - the membrane proton channel. CF(1) has five subunits: alpha(3), beta(3), gamma(1), delta(1), epsilon(1). CF(0) has three main subunits: a(1), b(2) and c(9-12). The alpha and beta chains form an alternating ring which encloses part of the gamma chain. CF(1) is attached to CF(0) by a central stalk formed by the gamma and epsilon chains, while a peripheral stalk is formed by the delta and b chains.

The protein resides in the cell inner membrane. It carries out the reaction ATP + H2O + 4 H(+)(in) = ADP + phosphate + 5 H(+)(out). Its function is as follows. Produces ATP from ADP in the presence of a proton gradient across the membrane. The alpha chain is a regulatory subunit. In Orientia tsutsugamushi (strain Ikeda) (Rickettsia tsutsugamushi), this protein is ATP synthase subunit alpha.